Consider the following 432-residue polypeptide: Serine--tRNA ligase (432 aa).

238 to 240 (TAE) is an L-serine binding site. ATP is bound at residue 269 to 271 (RSE). An L-serine-binding site is contributed by E292. Residue 356–359 (EVSS) coordinates ATP. L-serine is bound at residue S392.

It belongs to the class-II aminoacyl-tRNA synthetase family. Type-1 seryl-tRNA synthetase subfamily. Homodimer. The tRNA molecule binds across the dimer.

The protein localises to the cytoplasm. It catalyses the reaction tRNA(Ser) + L-serine + ATP = L-seryl-tRNA(Ser) + AMP + diphosphate + H(+). The enzyme catalyses tRNA(Sec) + L-serine + ATP = L-seryl-tRNA(Sec) + AMP + diphosphate + H(+). The protein operates within aminoacyl-tRNA biosynthesis; selenocysteinyl-tRNA(Sec) biosynthesis; L-seryl-tRNA(Sec) from L-serine and tRNA(Sec): step 1/1. Functionally, catalyzes the attachment of serine to tRNA(Ser). Is also able to aminoacylate tRNA(Sec) with serine, to form the misacylated tRNA L-seryl-tRNA(Sec), which will be further converted into selenocysteinyl-tRNA(Sec). In Buchnera aphidicola subsp. Baizongia pistaciae (strain Bp), this protein is Serine--tRNA ligase.